We begin with the raw amino-acid sequence, 826 residues long: Zinc phosphodiesterase ELAC protein 2 (826 aa).

Residues 1 to 16 (MWALCSLLRSAAGRTM) constitute a mitochondrion transit peptide. Disordered stretches follow at residues 16–51 (MSQG…PSGC) and 188–231 (EQRR…VSQR). Over residues 27 to 38 (ARRERPRKDPLR) the composition is skewed to basic and acidic residues. S199, S208, S212, S229, S618, and S736 each carry phosphoserine. Basic and acidic residues predominate over residues 208–224 (SPERSSDSESNENEPHL). A disordered region spans residues 798-826 (ELAGGLEDGEPQQKRAHTEEPQAKKVRAQ). Residues 808–820 (PQQKRAHTEEPQA) show a composition bias toward basic and acidic residues.

It belongs to the RNase Z family. As to quaternary structure, homodimer. Interacts with PTCD1. Zn(2+) is required as a cofactor.

The protein localises to the mitochondrion. The protein resides in the mitochondrion matrix. It localises to the mitochondrion nucleoid. Its subcellular location is the nucleus. The catalysed reaction is Endonucleolytic cleavage of RNA, removing extra 3' nucleotides from tRNA precursor, generating 3' termini of tRNAs. A 3'-hydroxy group is left at the tRNA terminus and a 5'-phosphoryl group is left at the trailer molecule.. Functionally, zinc phosphodiesterase, which displays mitochondrial tRNA 3'-processing endonuclease activity. Involved in tRNA maturation, by removing a 3'-trailer from precursor tRNA. Associates with mitochondrial DNA complexes at the nucleoids to initiate RNA processing and ribosome assembly. This is Zinc phosphodiesterase ELAC protein 2 (ELAC2) from Pan troglodytes (Chimpanzee).